A 103-amino-acid chain; its full sequence is MKLYSVAYIPQSYEVLGLVKGSMVQSKHIGRDIMAGLKGIVGGEIKGYTEMLNDARNIATDRMIEEAHALGANGIIGISYVTSSLMSNTSEVLVYGTAVKILS.

The protein belongs to the UPF0145 family.

The polypeptide is UPF0145 protein HH_1800 (Helicobacter hepaticus (strain ATCC 51449 / 3B1)).